A 279-amino-acid chain; its full sequence is Pantothenate synthetase (279 aa).

An ATP-binding site is contributed by 26–33 (MGNLHEGH). H33 (proton donor) is an active-site residue. Q57 contacts (R)-pantoate. Q57 lines the beta-alanine pocket. 144-147 (GKKD) is an ATP binding site. (R)-pantoate is bound at residue Q150. ATP is bound by residues V173 and 181–184 (LSSR).

It belongs to the pantothenate synthetase family. Homodimer.

Its subcellular location is the cytoplasm. It catalyses the reaction (R)-pantoate + beta-alanine + ATP = (R)-pantothenate + AMP + diphosphate + H(+). It participates in cofactor biosynthesis; (R)-pantothenate biosynthesis; (R)-pantothenate from (R)-pantoate and beta-alanine: step 1/1. Functionally, catalyzes the condensation of pantoate with beta-alanine in an ATP-dependent reaction via a pantoyl-adenylate intermediate. This chain is Pantothenate synthetase, found in Burkholderia vietnamiensis (strain G4 / LMG 22486) (Burkholderia cepacia (strain R1808)).